The following is a 227-amino-acid chain: Large ribosomal subunit protein uL3 (227 aa).

Positions 129–154 are disordered; that stretch reads GMQPVSHGQSDRTRSRGSSGAQGPQK.

It belongs to the universal ribosomal protein uL3 family. Part of the 50S ribosomal subunit. Forms a cluster with proteins L14 and L19.

In terms of biological role, one of the primary rRNA binding proteins, it binds directly near the 3'-end of the 23S rRNA, where it nucleates assembly of the 50S subunit. In Endomicrobium trichonymphae, this protein is Large ribosomal subunit protein uL3.